Consider the following 153-residue polypeptide: Ubiquitin-conjugating enzyme E2 36 (153 aa).

Positions Asn5–Ser151 constitute a UBC core domain. Cys89 acts as the Glycyl thioester intermediate in catalysis.

The protein belongs to the ubiquitin-conjugating enzyme family. In terms of assembly, interacts with yeast and human Mms2, with the RING domain of RGLG2 and with UEV1A, UEV1B, UEV1C and UEV1D. As to expression, ubiquitously expressed at low level.

It catalyses the reaction S-ubiquitinyl-[E1 ubiquitin-activating enzyme]-L-cysteine + [E2 ubiquitin-conjugating enzyme]-L-cysteine = [E1 ubiquitin-activating enzyme]-L-cysteine + S-ubiquitinyl-[E2 ubiquitin-conjugating enzyme]-L-cysteine.. It functions in the pathway protein modification; protein ubiquitination. Its function is as follows. Catalyzes the synthesis of non-canonical poly-ubiquitin chains that are linked through 'Lys-63'. This type of poly-ubiquitination does not lead to protein degradation by the proteasome. Mediates transcriptional activation of target genes. Required for postreplication repair of UV-damaged DNA and for adapting root developmental programs to suboptimal availability of iron. This chain is Ubiquitin-conjugating enzyme E2 36 (UBC36), found in Arabidopsis thaliana (Mouse-ear cress).